Consider the following 172-residue polypeptide: Adrenodoxin homolog, mitochondrial (172 aa).

The transit peptide at 1–16 (MLKIVTRAGHTARISN) directs the protein to the mitochondrion. One can recognise a 2Fe-2S ferredoxin-type domain in the interval 61–163 (LKITFILKDG…GIRVALPQMT (103 aa)). The [2Fe-2S] cluster site is built by cysteine 98, cysteine 104, cysteine 107, and cysteine 144.

The protein belongs to the adrenodoxin/putidaredoxin family. Interacts in its reduced state with the apo form of ISU1. It depends on [2Fe-2S] cluster as a cofactor.

The protein localises to the mitochondrion matrix. Iron-sulfur protein that transfers electrons in a wide variety of metabolic reactions. Involved in heme A biosynthesis and in iron-sulfur cluster assembly. Transfers electrons from adrenodoxin reductase ARH1 to heme A synthase COX15, a heme protein that catalyzes the conversion of heme O to heme A. Required for the de novo synthesis of Fe-S clusters on iron sulfur cluster assembly protein ISU1. Interact in its reduced state with ISU1 to productively deliver electrons for Fe-S cluster synthesis. Essential for coenzyme Q biosynthesis. May transfer the electrons required for the hydroxylation reaction performed by COQ6. The polypeptide is Adrenodoxin homolog, mitochondrial (Saccharomyces cerevisiae (strain ATCC 204508 / S288c) (Baker's yeast)).